The sequence spans 76 residues: Neuromacin-like protein (76 aa).

4 cysteine pairs are disulfide-bonded: Cys-18/Cys-25, Cys-40/Cys-44, Cys-54/Cys-61, and Cys-72/Cys-74.

It belongs to the macin family.

Its subcellular location is the secreted. The chain is Neuromacin-like protein from Aplysia californica (California sea hare).